Consider the following 196-residue polypeptide: Imidazole glycerol phosphate synthase subunit HisH (196 aa).

The region spanning 2–196 (NVVILDTGCA…AQLLKNFLEM (195 aa)) is the Glutamine amidotransferase type-1 domain. Cys-77 (nucleophile) is an active-site residue. Active-site residues include His-178 and Glu-180.

Heterodimer of HisH and HisF.

Its subcellular location is the cytoplasm. It carries out the reaction 5-[(5-phospho-1-deoxy-D-ribulos-1-ylimino)methylamino]-1-(5-phospho-beta-D-ribosyl)imidazole-4-carboxamide + L-glutamine = D-erythro-1-(imidazol-4-yl)glycerol 3-phosphate + 5-amino-1-(5-phospho-beta-D-ribosyl)imidazole-4-carboxamide + L-glutamate + H(+). It catalyses the reaction L-glutamine + H2O = L-glutamate + NH4(+). The protein operates within amino-acid biosynthesis; L-histidine biosynthesis; L-histidine from 5-phospho-alpha-D-ribose 1-diphosphate: step 5/9. Its function is as follows. IGPS catalyzes the conversion of PRFAR and glutamine to IGP, AICAR and glutamate. The HisH subunit catalyzes the hydrolysis of glutamine to glutamate and ammonia as part of the synthesis of IGP and AICAR. The resulting ammonia molecule is channeled to the active site of HisF. The polypeptide is Imidazole glycerol phosphate synthase subunit HisH (Salmonella choleraesuis (strain SC-B67)).